The primary structure comprises 404 residues: Propionate kinase PduW (404 aa).

It belongs to the acetokinase family. PduW subfamily.

It is found in the cytoplasm. It carries out the reaction propanoate + ATP = propanoyl phosphate + ADP. The protein operates within polyol metabolism; 1,2-propanediol degradation. It participates in organic acid metabolism; propanoate degradation. In terms of biological role, works with phosphate acetyltransferase (pta) to capture exogenous propionate and regenerate propionyl-CoA during degradation of propionate and 1,2-propanediol (1,2-PD). Ectopic expression partially complements a cobB deletion allowing some growth on propionate. Restores growth to an eutQ deletion on ethanolamine and tetrathionate under anoxic conditions. In Salmonella typhimurium (strain LT2 / SGSC1412 / ATCC 700720), this protein is Propionate kinase PduW.